The chain runs to 189 residues: Flavin prenyltransferase UbiX (189 aa).

Residues 11 to 13 (GAS), S37, 88 to 91 (SMRT), and R123 each bind FMN. Y153 is a dimethylallyl phosphate binding site.

The protein belongs to the UbiX/PAD1 family.

It carries out the reaction dimethylallyl phosphate + FMNH2 = prenylated FMNH2 + phosphate. In terms of biological role, flavin prenyltransferase that catalyzes the synthesis of the prenylated FMN cofactor (prenyl-FMN) for 4-hydroxy-3-polyprenylbenzoic acid decarboxylase UbiD. The prenyltransferase is metal-independent and links a dimethylallyl moiety from dimethylallyl monophosphate (DMAP) to the flavin N5 and C6 atoms of FMN. The chain is Flavin prenyltransferase UbiX from Neisseria meningitidis serogroup B (strain ATCC BAA-335 / MC58).